A 360-amino-acid chain; its full sequence is MSNTYGTIFRITTFGESHGNAVGVIVDGCPPNIEIDEAFIQSEMARRKPGQSKIVTQRQEDDEIEILSGVFEGKSTGTPIAMMVRNADQRSKDYSHIADRFRPSHADYTYQEKYGFRDYRGGGRSSARETLARVAAGALAKMILAKVNIKIQAYVSQVGPLKLTTDYKALNIPNAETNIIRCPDDAVAAKMIEFIDETRKNKDTIGGVVSCVIEGVPVGLGEPVFDKLHAELGKAMLSINAVKGFEYGSGFEGVEQFGSQHNDKFYADEQGNVRTQTNNSGGIQGGISNGEDIYFRVAFKPVATIMIDQESINDKGETVTVSGKGRHDPCVVPRAVPIVEAMAAIVMVDFYLRNKAIRLD.

Arg-47 lines the NADP(+) pocket. FMN-binding positions include 124 to 126, 240 to 241, Gly-285, 300 to 304, and Arg-326; these read RSS, NA, and KPVAT.

It belongs to the chorismate synthase family. Homotetramer. FMNH2 serves as cofactor.

The catalysed reaction is 5-O-(1-carboxyvinyl)-3-phosphoshikimate = chorismate + phosphate. The protein operates within metabolic intermediate biosynthesis; chorismate biosynthesis; chorismate from D-erythrose 4-phosphate and phosphoenolpyruvate: step 7/7. Catalyzes the anti-1,4-elimination of the C-3 phosphate and the C-6 proR hydrogen from 5-enolpyruvylshikimate-3-phosphate (EPSP) to yield chorismate, which is the branch point compound that serves as the starting substrate for the three terminal pathways of aromatic amino acid biosynthesis. This reaction introduces a second double bond into the aromatic ring system. This Cytophaga hutchinsonii (strain ATCC 33406 / DSM 1761 / CIP 103989 / NBRC 15051 / NCIMB 9469 / D465) protein is Chorismate synthase.